The sequence spans 62 residues: Photosystem II reaction center protein Z (62 aa).

The next 2 membrane-spanning stretches (helical) occupy residues 8–28 (VLTALVFFSFVMVVAVPVAYA) and 41–61 (YVGSAIWIGLVLLVAILNFLV).

The protein belongs to the PsbZ family. As to quaternary structure, PSII is composed of 1 copy each of membrane proteins PsbA, PsbB, PsbC, PsbD, PsbE, PsbF, PsbH, PsbI, PsbJ, PsbK, PsbL, PsbM, PsbT, PsbX, PsbY, PsbZ, Psb30/Ycf12, peripheral proteins PsbO, CyanoQ (PsbQ), PsbU, PsbV and a large number of cofactors. It forms dimeric complexes.

It is found in the cellular thylakoid membrane. In terms of biological role, may control the interaction of photosystem II (PSII) cores with the light-harvesting antenna, regulates electron flow through the 2 photosystem reaction centers. PSII is a light-driven water plastoquinone oxidoreductase, using light energy to abstract electrons from H(2)O, generating a proton gradient subsequently used for ATP formation. The polypeptide is Photosystem II reaction center protein Z (Crocosphaera subtropica (strain ATCC 51142 / BH68) (Cyanothece sp. (strain ATCC 51142))).